The primary structure comprises 504 residues: Myocilin (504 aa).

The signal sequence occupies residues 1–32 (MRFFCARCCSFGPEMPAVQLLLLACLVWDVGA). A glycan (N-linked (GlcNAc...) asparagine) is linked at asparagine 57. The stretch at 74-184 (LQRDSSTQRL…QEVARLRRGQ (111 aa)) forms a coiled coil. Disordered stretches follow at residues 106–131 (QAAR…RDQL) and 170–200 (LESS…PGSR). Positions 122–131 (GTLRRERDQL) are enriched in basic and acidic residues. Residues 244-503 (GCGELVWVGE…MVTYDIKLSK (260 aa)) enclose the Olfactomedin-like domain. Cysteines 245 and 433 form a disulfide. Residues aspartate 380, asparagine 428, alanine 429, isoleucine 477, and aspartate 478 each contribute to the Ca(2+) site. Positions 502 to 504 (SKM) match the Microbody targeting signal motif.

Homodimer (via N-terminus). Can also form higher oligomers. Interacts with OLFM3, FN1, NRCAM, GLDN and NFASC. Interacts (via N-terminus) with MYL2. Interacts with SFRP1, FRZB, FZD7, FZD10, FZD1 and WIF1; regulates Wnt signaling. Interacts with SNTA1; regulates muscle hypertrophy. Interacts with ERBB2 and ERBB3; activates ERBB2-ERBB3 signaling pathway. Interacts with SNCG; affects its secretion and its aggregation. In terms of processing, different isoforms may arise by post-translational modifications. Post-translationally, glycosylated. Palmitoylated. In terms of processing, undergoes a calcium-dependent proteolytic cleavage at Arg-226 by CAPN2 in the endoplasmic reticulum. The result is the production of two fragments, one of 35 kDa containing the C-terminal olfactomedin-like domain, and another of 20 kDa containing the N-terminal leucine zipper-like domain. Detected in aqueous humor. Detected in the eye (at protein level). Widely expressed. Highly expressed in various types of muscle, ciliary body, papillary sphincter, skeletal muscle, heart, and bone marrow-derived mesenchymal stem cells. Expressed predominantly in the retina. In normal eyes, found in the inner uveal meshwork region and the anterior portion of the meshwork. In contrast, in many glaucomatous eyes, it is found in more regions of the meshwork and seems to be expressed at higher levels than in normal eyes, regardless of the type or clinical severity of glaucoma. The myocilin 35 kDa fragment is detected in aqueous humor and to a lesser extent in iris and ciliary body.

The protein localises to the secreted. Its subcellular location is the golgi apparatus. It localises to the cytoplasmic vesicle. The protein resides in the extracellular space. It is found in the extracellular matrix. The protein localises to the extracellular exosome. Its subcellular location is the mitochondrion. It localises to the mitochondrion intermembrane space. The protein resides in the mitochondrion inner membrane. It is found in the mitochondrion outer membrane. The protein localises to the rough endoplasmic reticulum. Its subcellular location is the cell projection. It localises to the cilium. The protein resides in the endoplasmic reticulum. Its function is as follows. Secreted glycoprotein regulating the activation of different signaling pathways in adjacent cells to control different processes including cell adhesion, cell-matrix adhesion, cytoskeleton organization and cell migration. Promotes substrate adhesion, spreading and formation of focal contacts. Negatively regulates cell-matrix adhesion and stress fiber assembly through Rho protein signal transduction. Modulates the organization of actin cytoskeleton by stimulating the formation of stress fibers through interactions with components of Wnt signaling pathways. Promotes cell migration through activation of PTK2 and the downstream phosphatidylinositol 3-kinase signaling. Plays a role in bone formation and promotes osteoblast differentiation in a dose-dependent manner through mitogen-activated protein kinase signaling. Mediates myelination in the peripheral nervous system through ERBB2/ERBB3 signaling. Plays a role as a regulator of muscle hypertrophy through the components of dystrophin-associated protein complex. Involved in positive regulation of mitochondrial depolarization. Plays a role in neurite outgrowth. May participate in the obstruction of fluid outflow in the trabecular meshwork. The polypeptide is Myocilin (MYOC) (Homo sapiens (Human)).